The primary structure comprises 356 residues: 4-hydroxybenzoate polyprenyltransferase, mitochondrial (356 aa).

The N-terminal 44 residues, 1-44, are a transit peptide targeting the mitochondrion; it reads MITRSIGIARRSNSINCIVGSNTSTSYSLDESTKRWISTSTKQP. 6 helical membrane passes run 71–91, 93–113, 150–170, 195–215, 269–289, and 332–352; these read VDKPIGTWLLYWPCTWSIAMA, PAGQLPSIYMLSLFGAGAFLM, AIGLLAGLLSSSLAILLQLNW, WPQFVLGLTFNWGALLGWCAL, WLSAFGVGTVASLTACGIASD, and IILFSGIVASTLLKEVFQILI.

This sequence belongs to the UbiA prenyltransferase family. The cofactor is Mg(2+).

Its subcellular location is the mitochondrion inner membrane. The catalysed reaction is an all-trans-polyprenyl diphosphate + 4-hydroxybenzoate = a 4-hydroxy-3-(all-trans-polyprenyl)benzoate + diphosphate. The protein operates within cofactor biosynthesis; ubiquinone biosynthesis. Its function is as follows. Catalyzes the prenylation of para-hydroxybenzoate (PHB) with an all-trans polyprenyl group. Mediates the second step in the final reaction sequence of coenzyme Q (CoQ) biosynthesis, which is the condensation of the polyisoprenoid side chain with PHB, generating the first membrane-bound Q intermediate. This is 4-hydroxybenzoate polyprenyltransferase, mitochondrial (coq-2) from Caenorhabditis elegans.